Reading from the N-terminus, the 332-residue chain is Adenosine receptor A2b (332 aa).

Residues 1-8 (MQLETQDA) are Extracellular-facing. Residues 9–33 (LYVALELVIAALAVAGNVLVCAAVG) form a helical membrane-spanning segment. At 34–43 (ASSALQTPTN) the chain is on the cytoplasmic side. Residues 44-67 (YFLVSLATADVAVGLFAIPFAITI) traverse the membrane as a helical segment. The Extracellular segment spans residues 68-78 (SLGFCTDFHSC). Cys-78 and Cys-171 are disulfide-bonded. The helical transmembrane segment at 79–101 (LFLACFVLVLTQSSIFSLLAVAV) threads the bilayer. Over 102–121 (DRYLAIRVPLRYKGLVTGTR) the chain is Cytoplasmic. Residues 122 to 144 (ARGIIAVLWVLAFGIGLTPFLGW) form a helical membrane-spanning segment. The Extracellular portion of the chain corresponds to 145-178 (NSKDRATSNCTEPGDGITNKSCCPVKCLFENVVP). 2 N-linked (GlcNAc...) asparagine glycosylation sites follow: Asn-153 and Asn-163. Glu-174 is a binding site for adenosine. The helical transmembrane segment at 179 to 203 (MSYMVYFNFFGCVLPPLLIMMVIYI) threads the bilayer. The Cytoplasmic portion of the chain corresponds to 204 to 235 (KIFMVACKQLQHMELMEHSRTTLQREIHAAKS). The helical transmembrane segment at 236-259 (LAMIVGIFALCWLPVHAINCITLF) threads the bilayer. Asn-254 provides a ligand contact to adenosine. Residues 260–267 (HPALAKDK) lie on the Extracellular side of the membrane. Residues 268–291 (PKWVMNVAILLSHANSVVNPIVYA) traverse the membrane as a helical segment. Residues Ser-279 and His-280 each coordinate adenosine. Topologically, residues 292-332 (YRNRDFRYSFHRIISRYVLCQTDTKGGSGQAGGQSTFSLSL) are cytoplasmic. Cys-311 carries the S-palmitoyl cysteine lipid modification.

This sequence belongs to the G-protein coupled receptor 1 family.

It localises to the cell membrane. Receptor for adenosine. The activity of this receptor is mediated by G proteins which activate adenylyl cyclase. The polypeptide is Adenosine receptor A2b (Adora2b) (Rattus norvegicus (Rat)).